The sequence spans 92 residues: Large ribosomal subunit protein eL37 (92 aa).

Zn(2+) contacts are provided by Cys19, Cys22, Cys34, and Cys37. Residues 19-37 (CRRCGRRSYHIQKSTCANC) form a C4-type zinc finger. A disordered region spans residues 50–92 (SEKAKRRKTTGSGRTAHLRDVHRRFKNGFQVGTPKGARGPENH).

This sequence belongs to the eukaryotic ribosomal protein eL37 family. The cofactor is Zn(2+).

Binds to the 23S rRNA. In Emericella nidulans (strain FGSC A4 / ATCC 38163 / CBS 112.46 / NRRL 194 / M139) (Aspergillus nidulans), this protein is Large ribosomal subunit protein eL37 (rpl37).